The chain runs to 400 residues: Putative F-box protein At1g30920 (400 aa).

Positions 4–49 (EENTDSIPIDLILDILSRLPSKSIARCRCVSKLWESMIRQSYFTEL) constitute an F-box domain.

In Arabidopsis thaliana (Mouse-ear cress), this protein is Putative F-box protein At1g30920.